Here is a 225-residue protein sequence, read N- to C-terminus: UPF0758 protein BB3258 (225 aa).

The MPN domain occupies 103-225; sequence ALANPDLVRR…TVSMAAQGHL (123 aa). Zn(2+) is bound by residues His-174, His-176, and Asp-187. Positions 174–187 match the JAMM motif motif; it reads HNHPGGTAAASAAD.

This sequence belongs to the UPF0758 family.

The sequence is that of UPF0758 protein BB3258 from Bordetella bronchiseptica (strain ATCC BAA-588 / NCTC 13252 / RB50) (Alcaligenes bronchisepticus).